A 694-amino-acid polypeptide reads, in one-letter code: Methionine--tRNA ligase (694 aa).

The short motif at 14–24 (PYANGPIHLGH) is the 'HIGH' region element. Residues Cys-145, Cys-148, Cys-158, and Cys-161 each contribute to the Zn(2+) site. The short motif at 330–334 (KMSKS) is the 'KMSKS' region element. ATP is bound at residue Lys-333. Positions 558–579 (SLQATAGQPEPHSQVRHAEHQQ) are disordered. The region spanning 593-694 (DFAKVDLRIA…EGAQPGMKVK (102 aa)) is the tRNA-binding domain.

The protein belongs to the class-I aminoacyl-tRNA synthetase family. MetG type 1 subfamily. As to quaternary structure, homodimer. Zn(2+) is required as a cofactor.

The protein localises to the cytoplasm. It catalyses the reaction tRNA(Met) + L-methionine + ATP = L-methionyl-tRNA(Met) + AMP + diphosphate. Its function is as follows. Is required not only for elongation of protein synthesis but also for the initiation of all mRNA translation through initiator tRNA(fMet) aminoacylation. The polypeptide is Methionine--tRNA ligase (Methylococcus capsulatus (strain ATCC 33009 / NCIMB 11132 / Bath)).